The following is a 158-amino-acid chain: MADIQTERAYQKQPTIFQNKKRVLLGETGKEKLPRYYKNIGLGFKTPKEAIEGTYIDKKCPFTGNVSIRGRILSGVVTKMKMQRTIVIRRDYLHYIRKYNRFEKRHKNMSVHLSPCFRDVQIGDIVTVGECRPLSKTVRFNVLKVTKAAGTKKQFQKF.

N-acetylalanine is present on A2. Citrulline is present on R22. 3 positions are modified to N6-acetyllysine: K38, K45, and K58. Residue C60 is the site of S-palmitoyl cysteine attachment. S67 bears the Phosphoserine mark. Position 69 is an omega-N-methylarginine (R69). At S110 the chain carries Phosphoserine.

Belongs to the universal ribosomal protein uS17 family. As to quaternary structure, component of the small ribosomal subunit. Part of the small subunit (SSU) processome, composed of more than 70 proteins and the RNA chaperone small nucleolar RNA (snoRNA) U3. Post-translationally, citrullinated by PADI4.

Its subcellular location is the cytoplasm. The protein resides in the nucleus. It localises to the nucleolus. Component of the small ribosomal subunit. The ribosome is a large ribonucleoprotein complex responsible for the synthesis of proteins in the cell. Part of the small subunit (SSU) processome, first precursor of the small eukaryotic ribosomal subunit. During the assembly of the SSU processome in the nucleolus, many ribosome biogenesis factors, an RNA chaperone and ribosomal proteins associate with the nascent pre-rRNA and work in concert to generate RNA folding, modifications, rearrangements and cleavage as well as targeted degradation of pre-ribosomal RNA by the RNA exosome. This Mus musculus (Mouse) protein is Small ribosomal subunit protein uS17 (Rps11).